The following is a 175-amino-acid chain: Large ribosomal subunit protein uL10 (175 aa).

The protein belongs to the universal ribosomal protein uL10 family. Part of the ribosomal stalk of the 50S ribosomal subunit. The N-terminus interacts with L11 and the large rRNA to form the base of the stalk. The C-terminus forms an elongated spine to which L12 dimers bind in a sequential fashion forming a multimeric L10(L12)X complex.

Its function is as follows. Forms part of the ribosomal stalk, playing a central role in the interaction of the ribosome with GTP-bound translation factors. The chain is Large ribosomal subunit protein uL10 from Halorhodospira halophila (strain DSM 244 / SL1) (Ectothiorhodospira halophila (strain DSM 244 / SL1)).